A 149-amino-acid chain; its full sequence is Transcriptional repressor NrdR (149 aa).

A zinc finger spans residues 3-34; the sequence is CPFCCAVDTKVIDSRLVGEGSSVRRRRQCVVC. Positions 49–139 constitute an ATP-cone domain; it reads PRVVKSNDVR…VYRSFEDIRE (91 aa).

This sequence belongs to the NrdR family. The cofactor is Zn(2+).

Negatively regulates transcription of bacterial ribonucleotide reductase nrd genes and operons by binding to NrdR-boxes. In Erwinia tasmaniensis (strain DSM 17950 / CFBP 7177 / CIP 109463 / NCPPB 4357 / Et1/99), this protein is Transcriptional repressor NrdR.